Consider the following 1007-residue polypeptide: Zinc finger CCCH domain-containing protein 4 (1007 aa).

The region spanning 28-192 (VEKVKGNRVT…FRDLGRGERV (165 aa)) is the Helicase ATP-binding domain. 41 to 48 (GDTGCGKS) contributes to the ATP binding site. The short motif at 139 to 142 (DEIH) is the DEAH box element. The 171-residue stretch at 250–420 (LIHRLLLHIH…EQVLMICCAE (171 aa)) folds into the Helicase C-terminal domain. C3H1-type zinc fingers lie at residues 723–750 (ALEN…HSSR) and 751–778 (APRP…HDSG).

In Oryza sativa subsp. japonica (Rice), this protein is Zinc finger CCCH domain-containing protein 4.